Reading from the N-terminus, the 140-residue chain is MAAVILERAAEFVAPGEARVGYPILAEVYRALTSDHEMRAFYETCAVSFFALFMLIIWVLHASRHPEGSTTRGTDAHTQTEGSTTRGTDAHTQTEGSRDQGSMTPEADDLTRPPLGHGRQIPVLRRRMVLDRDLRIDYSL.

Residues 44-60 traverse the membrane as a helical segment; sequence TCAVSFFALFMLIIWVL. The tract at residues 66-118 is disordered; sequence PEGSTTRGTDAHTQTEGSTTRGTDAHTQTEGSRDQGSMTPEADDLTRPPLGHG. Residues 68-103 are compositionally biased toward polar residues; that stretch reads GSTTRGTDAHTQTEGSTTRGTDAHTQTEGSRDQGSM.

It is found in the membrane. In Ictalurid herpesvirus 1 (strain Auburn) (IcHV-1), this protein is Putative membrane protein ORF7 (ORF7).